The chain runs to 345 residues: Alpha-2-HS-glycoprotein (345 aa).

An N-terminal signal peptide occupies residues 1 to 18 (MKSLVLLLCFAQLWGCQS). Residues 19–133 (APQGTGLGFR…QFRVMHTQCH (115 aa)) form the Cystatin fetuin-A-type 1 domain. Intrachain disulfides connect Cys-32-Cys-336, Cys-89-Cys-100, Cys-114-Cys-132, Cys-146-Cys-149, Cys-208-Cys-219, and Cys-230-Cys-247. The N-linked (GlcNAc...) asparagine glycan is linked to Asn-99. Ser-134 is subject to Phosphoserine. At Thr-135 the chain carries Phosphothreonine. A Phosphoserine modification is found at Ser-138. Positions 144 to 250 (KLCPRCPLLT…EEVSVACKLF (107 aa)) constitute a Cystatin fetuin-A-type 2 domain. N-linked (GlcNAc...) asparagine glycans are attached at residues Asn-156 and Asn-176. Residues Ser-305, Ser-309, Ser-312, and Ser-314 each carry the phosphoserine modification. Residues 312–334 (SASGETLHSPKVGQPGAAGPVSP) are disordered.

Belongs to the fetuin family. In terms of processing, phosphorylated by FAM20C in the extracellular medium. As to expression, liver is the major site of synthesis, but fetuin is also expressed in limb buds and other extrahepatic tissues during development.

It localises to the secreted. Functionally, probably involved in differentiation. In terms of biological role, (Microbial infection) Facilitates invasion of hepatocytes by Plasmodium berghei sporozoites. This is Alpha-2-HS-glycoprotein (Ahsg) from Mus musculus (Mouse).